Reading from the N-terminus, the 118-residue chain is Small ribosomal subunit protein bTHXc (118 aa).

The transit peptide at 1–55 (MASLILGAPPRVTVALPSSRLSSSHSETAGVSLSCFTHQFSLSTSSSSSIPLVYC) directs the protein to the chloroplast. A disordered region spans residues 61–118 (KTAKGKRFNHSFGNARPRNKSKGRGPERVPVPPAPPRKDKFENDEKIKIDIDESLFSN). Positions 96–111 (PRKDKFENDEKIKIDI) are enriched in basic and acidic residues. Ser-117 carries the post-translational modification Phosphoserine.

This sequence belongs to the bacterial ribosomal protein bTHX family. Part of the 30S ribosomal subunit.

It localises to the plastid. The protein localises to the chloroplast. The protein is Small ribosomal subunit protein bTHXc (RPS31) of Arabidopsis thaliana (Mouse-ear cress).